The primary structure comprises 342 residues: Guanine nucleotide-binding protein alpha-9 subunit (342 aa).

Gly2 carries N-myristoyl glycine lipidation. Cys3 is lipidated: S-palmitoyl cysteine. The G-alpha domain occupies 28–342 (REIKLLLLGS…IIQSILKLHY (315 aa)). A G1 motif region spans residues 31–44 (KLLLLGSGDSGKST). GTP contacts are provided by residues 36-43 (GSGDSGKS), 167-173 (LRCRQRT), 192-196 (DVGGQ), 261-264 (NKND), and Ala316. Mg(2+)-binding residues include Ser43 and Thr173. A G2 motif region spans residues 165 to 173 (DVLRCRQRT). The interval 188–197 (FRLIDVGGQK) is G3 motif. A G4 motif region spans residues 257–264 (VLFLNKND). The interval 314 to 319 (TTATDT) is G5 motif.

The protein belongs to the G-alpha family. G proteins are composed of 3 units; alpha, beta and gamma. The alpha chain contains the guanine nucleotide binding site.

Guanine nucleotide-binding proteins (G proteins) are involved as modulators or transducers in various transmembrane signaling systems. G alpha-9 antagonizes broad chemotactic response. It functions rapidly following receptor stimulation to negatively regulate PI3K/PTEN, adenylyl cyclase, and guanylyl cyclase pathways. The sequence is that of Guanine nucleotide-binding protein alpha-9 subunit (gpaI) from Dictyostelium discoideum (Social amoeba).